The following is a 796-amino-acid chain: Protein tyrosine phosphatase domain-containing protein 1 (796 aa).

A Tyrosine-protein phosphatase domain is found at 126-297; sequence YSSWVTDNIL…LIPLRNIFSC (172 aa). Cys234 acts as the Phosphocysteine intermediate in catalysis. 2 positions are modified to phosphoserine: Ser435 and Ser437.

It belongs to the protein-tyrosine phosphatase family. Non-receptor class PTPDC1 subfamily.

In terms of biological role, may play roles in cilia formation and/or maintenance. The chain is Protein tyrosine phosphatase domain-containing protein 1 (PTPDC1) from Bos taurus (Bovine).